The following is a 123-amino-acid chain: Mediator of RNA polymerase II transcription subunit 9 (123 aa).

Residues 95 to 123 (WQLHIQEKKIELEKKTKHLQRLRESIQKQ) adopt a coiled-coil conformation.

Belongs to the Mediator complex subunit 9 family. In terms of assembly, component of the Mediator complex.

It localises to the nucleus. Its function is as follows. Component of the Mediator complex, a coactivator involved in the regulated transcription of nearly all RNA polymerase II-dependent genes. Mediator functions as a bridge to convey information from gene-specific regulatory proteins to the basal RNA polymerase II transcription machinery. Mediator is recruited to promoters by direct interactions with regulatory proteins and serves as a scaffold for the assembly of a functional preinitiation complex with RNA polymerase II and the general transcription factors. In Kluyveromyces lactis (strain ATCC 8585 / CBS 2359 / DSM 70799 / NBRC 1267 / NRRL Y-1140 / WM37) (Yeast), this protein is Mediator of RNA polymerase II transcription subunit 9 (CSE2).